Reading from the N-terminus, the 316-residue chain is Methionyl-tRNA formyltransferase (316 aa).

Gly111 to Pro114 is a (6S)-5,6,7,8-tetrahydrofolate binding site.

Belongs to the Fmt family.

The catalysed reaction is L-methionyl-tRNA(fMet) + (6R)-10-formyltetrahydrofolate = N-formyl-L-methionyl-tRNA(fMet) + (6S)-5,6,7,8-tetrahydrofolate + H(+). Functionally, attaches a formyl group to the free amino group of methionyl-tRNA(fMet). The formyl group appears to play a dual role in the initiator identity of N-formylmethionyl-tRNA by promoting its recognition by IF2 and preventing the misappropriation of this tRNA by the elongation apparatus. This Chlamydia trachomatis serovar A (strain ATCC VR-571B / DSM 19440 / HAR-13) protein is Methionyl-tRNA formyltransferase.